The following is a 156-amino-acid chain: MPRRGRVPRRAVLADPLYGNTKVTKLINQVMLDGKKSLAQRICYDAFEIIKNKTGKDPVEVFEQALKNVMPVLEVKARRVGGANYQVPVEVRPERRQTLGIRWLVNYARARSGKSMQEKLAAELIDAANNTGGAVKKREDTHKMAEANKAFAHYRW.

Belongs to the universal ribosomal protein uS7 family. In terms of assembly, part of the 30S ribosomal subunit. Contacts proteins S9 and S11.

One of the primary rRNA binding proteins, it binds directly to 16S rRNA where it nucleates assembly of the head domain of the 30S subunit. Is located at the subunit interface close to the decoding center, probably blocks exit of the E-site tRNA. This is Small ribosomal subunit protein uS7 from Moorella thermoacetica (strain ATCC 39073 / JCM 9320).